Here is an 848-residue protein sequence, read N- to C-terminus: MLRRAASNAYSWWWASHVRTKQSKWLEENLQDIEEKVEYALKLLEDEGDSFAKRAEMYYKRRPELISFVEESFKAYRALAERYDHISKELQNANTTIASVFPDQVPEFAMNEDDDDDAPVSPRHHKNKTSNKNVPKVPDLPIKDPEAAKKMFMSRKAIQEQNASSVVNKSGLSKTEAVEEIDKLQKEILVLQTEKEFVKTSYENGLAKYWEIEKCIMEKQGKVSSLQDEFDEGAVVIEDKEAQILMSTTALKSCQEKLEELRDKQEQNVKEVDVSRKQISESTEEFGNLSDALLGDGKGNHEIYSEKEKLESLGEKVNDEFDDSEAKSCLTIPDVADKIDELVNDVINLENLFSSQAALIHRLREEIDDLKAQIRALQKENNSSQTDDNMDMGKKLKEMEEKVNGVKDIDQEVEEKSDNIDKHLTRAHMKLSFLSKRLKSLTQEGEDEELKATNVPIQDIGSLTDTKFPEENIDDTVVSENALDIKSASEVVFAEKDLSDEVNQEEAIETKTKEASLSDLEKHISSPKSDIITTQESSDELFLQKLLAHGIEGREKHLLTEYTKVLRNYKEVKKLLHETETKLKNVNTLKDEGKDQQRGQLFMLICREDNNATNAITGQKQRMSPNEEQLGARVDALLSENLNLLVRFSNSFGKIQQFDTGIKDLHGEMLKIIKQKNQDGGKNTLRSNVRPIYKHLSEIRTEMTVWLEKSLLLKEEINIRASTLSDIHNEITEALKTDSEDSEIKFTIYQGAKFEGEVSNMKKENNRIAEELQTGLDQVTKLMKDADTTLEKLSEEFSLSESNTQSSQDRSRIPLRSFIFDRKPKKQRLSLFSCIQPSLSKMKKPAGS.

Residues 10–90 (YSWWWASHVR…ERYDHISKEL (81 aa)) form the NAB domain. Residues 108–141 (FAMNEDDDDDAPVSPRHHKNKTSNKNVPKVPDLP) are disordered. Coiled-coil stretches lie at residues 172–204 (LSKT…SYEN), 241–278 (EAQI…SRKQ), 305–454 (SEKE…KATN), and 752–797 (AKFE…SEEF).

The protein belongs to the NET family.

In terms of biological role, plant-specific actin binding protein. May be part of a membrane-cytoskeletal adapter complex. This is Protein NETWORKED 2C from Arabidopsis thaliana (Mouse-ear cress).